Consider the following 503-residue polypeptide: Aspartyl/glutamyl-tRNA(Asn/Gln) amidotransferase subunit B (503 aa).

Belongs to the GatB/GatE family. GatB subfamily. As to quaternary structure, heterotrimer of A, B and C subunits.

It carries out the reaction L-glutamyl-tRNA(Gln) + L-glutamine + ATP + H2O = L-glutaminyl-tRNA(Gln) + L-glutamate + ADP + phosphate + H(+). It catalyses the reaction L-aspartyl-tRNA(Asn) + L-glutamine + ATP + H2O = L-asparaginyl-tRNA(Asn) + L-glutamate + ADP + phosphate + 2 H(+). Its function is as follows. Allows the formation of correctly charged Asn-tRNA(Asn) or Gln-tRNA(Gln) through the transamidation of misacylated Asp-tRNA(Asn) or Glu-tRNA(Gln) in organisms which lack either or both of asparaginyl-tRNA or glutaminyl-tRNA synthetases. The reaction takes place in the presence of glutamine and ATP through an activated phospho-Asp-tRNA(Asn) or phospho-Glu-tRNA(Gln). The sequence is that of Aspartyl/glutamyl-tRNA(Asn/Gln) amidotransferase subunit B from Rhodococcus jostii (strain RHA1).